The following is a 340-amino-acid chain: MKESINILAIESSCDETSAAVVVNGREVLSNIIASQISTHEKFGGVVPEVASRKHIEVISAVVQEALDEANFTLDDIDAIGVTYGPGLVGALLVGLQYAKGLAFATGKPLIGVNHIEGHISANFIEYKDLKPPFMCLVVSGGHTFIVYMKDYGEFEVLGETRDDAAGEAFDKVARAIGLGYPGGPKIDKISKEGNEEAIKFPRANFHNDTLDFSFSGIKSAVLNYLNKKEMKGEEINKADVAASFQKSVVDVLVDNTIKACMSKKVDKIAVAGGVASNSCLRETLVRECKKKGIEVLIPPFILCTDNAAMIGSAAYFEYIKGRRTSLDINAVPNLKLGER.

The Fe cation site is built by His115 and His119. Substrate is bound by residues Val138–Gly142, Asp171, Gly184, Asp188, and Asn278. Asp306 is a Fe cation binding site.

It belongs to the KAE1 / TsaD family. Fe(2+) serves as cofactor.

The protein resides in the cytoplasm. The catalysed reaction is L-threonylcarbamoyladenylate + adenosine(37) in tRNA = N(6)-L-threonylcarbamoyladenosine(37) in tRNA + AMP + H(+). In terms of biological role, required for the formation of a threonylcarbamoyl group on adenosine at position 37 (t(6)A37) in tRNAs that read codons beginning with adenine. Is involved in the transfer of the threonylcarbamoyl moiety of threonylcarbamoyl-AMP (TC-AMP) to the N6 group of A37, together with TsaE and TsaB. TsaD likely plays a direct catalytic role in this reaction. This is tRNA N6-adenosine threonylcarbamoyltransferase from Clostridium botulinum (strain Hall / ATCC 3502 / NCTC 13319 / Type A).